The sequence spans 468 residues: ATP synthase subunit beta 2 (468 aa).

Residue 145-152 coordinates ATP; it reads GGAGVGKT.

Belongs to the ATPase alpha/beta chains family. In terms of assembly, F-type ATPases have 2 components, CF(1) - the catalytic core - and CF(0) - the membrane proton channel. CF(1) has five subunits: alpha(3), beta(3), gamma(1), delta(1), epsilon(1). CF(0) has three main subunits: a(1), b(2) and c(9-12). The alpha and beta chains form an alternating ring which encloses part of the gamma chain. CF(1) is attached to CF(0) by a central stalk formed by the gamma and epsilon chains, while a peripheral stalk is formed by the delta and b chains.

It localises to the cell membrane. The catalysed reaction is ATP + H2O + 4 H(+)(in) = ADP + phosphate + 5 H(+)(out). Produces ATP from ADP in the presence of a proton gradient across the membrane. The catalytic sites are hosted primarily by the beta subunits. The protein is ATP synthase subunit beta 2 of Mycoplasmopsis pulmonis (strain UAB CTIP) (Mycoplasma pulmonis).